The primary structure comprises 69 residues: uncharacterized protein (69 aa).

The next 2 helical transmembrane spans lie at 7–29 (LLSG…LGSI) and 44–66 (ALQV…LGLL).

It localises to the cell membrane. This is an uncharacterized protein from Archaeoglobus fulgidus (strain ATCC 49558 / DSM 4304 / JCM 9628 / NBRC 100126 / VC-16).